Here is a 1051-residue protein sequence, read N- to C-terminus: Kinesin-like protein KIN-UC (1051 aa).

Low complexity-rich tracts occupy residues Met-1 to Ser-12, Asn-28 to Ser-39, and Ser-64 to Arg-90. 2 disordered regions span residues Met-1–Ser-39 and Pro-51–Val-109. The region spanning Arg-104–Ile-441 is the Kinesin motor domain. Gly-189–Thr-196 contributes to the ATP binding site. A D-BOX motif is present at residues Arg-411–Gly-419. Coiled coils occupy residues Asp-452–Gln-534 and Asp-568–Met-761. Residues Asn-753 to Ser-766 are compositionally biased toward basic and acidic residues. The interval Asn-753–Leu-788 is disordered. Residues Ser-772–Leu-788 are compositionally biased toward polar residues. 3 ARM repeats span residues Arg-792–Ala-831, Glu-833–Met-873, and Glu-875–Gly-915. An ARM 4; degenerate repeat occupies Glu-917–Lys-956.

It belongs to the TRAFAC class myosin-kinesin ATPase superfamily. Kinesin family. Ungrouped subfamily. In terms of assembly, interacts (via C-terminus) with NEK5. As to expression, expressed in young root hair-forming cells and in root hair-producing cells at the boundary between the hypocotyl and root. Expressed in cotyledons, young leaves, trichomes and flowers.

The protein localises to the cytoplasm. Its subcellular location is the cytoskeleton. It is found in the spindle. The protein resides in the phragmoplast. Acts as a plus-end microtubule-dependent motor protein. Involved in the control of root hair tip growth by promoting microtubule depolymerization and limiting the accumulation of endoplasmic microtubules. In vitro, binds to polymerized actin through ARM repeats, and to polymerized tubulin through N-terminal motor domain. The sequence is that of Kinesin-like protein KIN-UC from Arabidopsis thaliana (Mouse-ear cress).